A 142-amino-acid chain; its full sequence is Universal stress protein C (142 aa).

This sequence belongs to the universal stress protein A family.

The protein resides in the cytoplasm. Required for resistance to DNA-damaging agents. In Escherichia coli O157:H7, this protein is Universal stress protein C (uspC).